Here is a 71-residue protein sequence, read N- to C-terminus: ATP synthase F(0) complex subunit e, mitochondrial (71 aa).

N6-acetyllysine is present on lysine 34. Residue serine 68 is modified to Phosphoserine.

It belongs to the ATPase e subunit family. In terms of assembly, component of the ATP synthase complex composed at least of ATP5F1A/subunit alpha, ATP5F1B/subunit beta, ATP5MC1/subunit c (homooctomer), MT-ATP6/subunit a, MT-ATP8/subunit 8, ATP5ME/subunit e, ATP5MF/subunit f, ATP5MG/subunit g, ATP5MK/subunit k, ATP5MJ/subunit j, ATP5F1C/subunit gamma, ATP5F1D/subunit delta, ATP5F1E/subunit epsilon, ATP5PF/subunit F6, ATP5PB/subunit b, ATP5PD/subunit d, ATP5PO/subunit OSCP. ATP synthase complex consists of a soluble F(1) head domain (subunits alpha(3) and beta(3)) - the catalytic core - and a membrane F(0) domain - the membrane proton channel (subunits c, a, 8, e, f, g, k and j). These two domains are linked by a central stalk (subunits gamma, delta, and epsilon) rotating inside the F1 region and a stationary peripheral stalk (subunits F6, b, d, and OSCP). As to expression, mammary gland, liver, kidney, heart, spleen, brain and lung.

It localises to the mitochondrion. The protein resides in the mitochondrion inner membrane. In terms of biological role, subunit e, of the mitochondrial membrane ATP synthase complex (F(1)F(0) ATP synthase or Complex V) that produces ATP from ADP in the presence of a proton gradient across the membrane which is generated by electron transport complexes of the respiratory chain. ATP synthase complex consist of a soluble F(1) head domain - the catalytic core - and a membrane F(1) domain - the membrane proton channel. These two domains are linked by a central stalk rotating inside the F(1) region and a stationary peripheral stalk. During catalysis, ATP synthesis in the catalytic domain of F(1) is coupled via a rotary mechanism of the central stalk subunits to proton translocation. In vivo, can only synthesize ATP although its ATP hydrolase activity can be activated artificially in vitro. Part of the complex F(0) domain. The polypeptide is ATP synthase F(0) complex subunit e, mitochondrial (Mus musculus (Mouse)).